We begin with the raw amino-acid sequence, 217 residues long: Probable glutathione S-transferase (217 aa).

The 80-residue stretch at 2–81 (AEVKLLGLRY…YIDEAFEGPS (80 aa)) folds into the GST N-terminal domain. Residues Ser-12, Lys-39, Ile-53, and 65-66 (ES) each bind glutathione. One can recognise a GST C-terminal domain in the interval 86–210 (DPYDRALARF…ELLIRYRAYI (125 aa)).

The protein belongs to the GST superfamily. HSP26 family.

The enzyme catalyses RX + glutathione = an S-substituted glutathione + a halide anion + H(+). The protein is Probable glutathione S-transferase (PRP1) of Solanum tuberosum (Potato).